A 315-amino-acid polypeptide reads, in one-letter code: Methionyl-tRNA formyltransferase (315 aa).

113–116 (SLLP) is a (6S)-5,6,7,8-tetrahydrofolate binding site.

Belongs to the Fmt family.

It carries out the reaction L-methionyl-tRNA(fMet) + (6R)-10-formyltetrahydrofolate = N-formyl-L-methionyl-tRNA(fMet) + (6S)-5,6,7,8-tetrahydrofolate + H(+). In terms of biological role, attaches a formyl group to the free amino group of methionyl-tRNA(fMet). The formyl group appears to play a dual role in the initiator identity of N-formylmethionyl-tRNA by promoting its recognition by IF2 and preventing the misappropriation of this tRNA by the elongation apparatus. The polypeptide is Methionyl-tRNA formyltransferase (Erwinia tasmaniensis (strain DSM 17950 / CFBP 7177 / CIP 109463 / NCPPB 4357 / Et1/99)).